We begin with the raw amino-acid sequence, 292 residues long: Probable endonuclease 4 (292 aa).

Zn(2+)-binding residues include His-70, His-111, Glu-146, Asp-180, His-183, His-215, Asp-228, His-230, and Glu-260.

The protein belongs to the AP endonuclease 2 family. It depends on Zn(2+) as a cofactor.

The catalysed reaction is Endonucleolytic cleavage to 5'-phosphooligonucleotide end-products.. Functionally, endonuclease IV plays a role in DNA repair. It cleaves phosphodiester bonds at apurinic or apyrimidinic (AP) sites, generating a 3'-hydroxyl group and a 5'-terminal sugar phosphate. The chain is Probable endonuclease 4 from Shouchella clausii (strain KSM-K16) (Alkalihalobacillus clausii).